The chain runs to 265 residues: tRNA (guanine-N(1)-)-methyltransferase (265 aa).

Residues Gly110 and 129 to 134 (LGDFVM) each bind S-adenosyl-L-methionine. Residues 243-265 (LAAWGAPPPPLPKRRRGAKPNPN) are disordered. Over residues 254–265 (PKRRRGAKPNPN) the composition is skewed to basic residues.

The protein belongs to the RNA methyltransferase TrmD family. In terms of assembly, homodimer.

It is found in the cytoplasm. It carries out the reaction guanosine(37) in tRNA + S-adenosyl-L-methionine = N(1)-methylguanosine(37) in tRNA + S-adenosyl-L-homocysteine + H(+). In terms of biological role, specifically methylates guanosine-37 in various tRNAs. The sequence is that of tRNA (guanine-N(1)-)-methyltransferase from Deinococcus geothermalis (strain DSM 11300 / CIP 105573 / AG-3a).